Reading from the N-terminus, the 196-residue chain is Ribosome-binding factor A (196 aa).

It belongs to the RbfA family. As to quaternary structure, monomer. Binds 30S ribosomal subunits, but not 50S ribosomal subunits or 70S ribosomes.

Its subcellular location is the cytoplasm. Its function is as follows. One of several proteins that assist in the late maturation steps of the functional core of the 30S ribosomal subunit. Associates with free 30S ribosomal subunits (but not with 30S subunits that are part of 70S ribosomes or polysomes). Required for efficient processing of 16S rRNA. May interact with the 5'-terminal helix region of 16S rRNA. The protein is Ribosome-binding factor A of Tropheryma whipplei (strain TW08/27) (Whipple's bacillus).